The chain runs to 524 residues: Lysophospholipid acyltransferase LPCAT4 (524 aa).

2 consecutive transmembrane segments (helical) span residues 40–62 (CLLG…FLLW) and 87–107 (TVCH…LGFL). An HXXXXD motif motif is present at residues 129–134 (HSTFFD). N-linked (GlcNAc...) asparagine glycosylation occurs at asparagine 152. The tract at residues 490-524 (PHKPRSTSQIPNASSPSSPTALANGTVQAPKQKGD) is disordered. The span at 495–518 (STSQIPNASSPSSPTALANGTVQA) shows a compositional bias: polar residues.

It belongs to the 1-acyl-sn-glycerol-3-phosphate acyltransferase family. In terms of tissue distribution, widely expressed with much higher level in brain. Expressed in erythroleukemic cells but not in reticulocytes.

Its subcellular location is the endoplasmic reticulum membrane. It carries out the reaction a 1-acyl-sn-glycero-3-phosphoethanolamine + an acyl-CoA = a 1,2-diacyl-sn-glycero-3-phosphoethanolamine + CoA. The enzyme catalyses a 1-O-(1Z-alkenyl)-sn-glycero-3-phosphoethanolamine + an acyl-CoA = a 1-O-(1Z-alkenyl)-2-acyl-sn-glycero-3-phosphoethanolamine + CoA. The catalysed reaction is a 1-acyl-sn-glycero-3-phosphocholine + an acyl-CoA = a 1,2-diacyl-sn-glycero-3-phosphocholine + CoA. It catalyses the reaction a 1-O-alkyl-sn-glycero-3-phosphocholine + acetyl-CoA = a 1-O-alkyl-2-acetyl-sn-glycero-3-phosphocholine + CoA. It carries out the reaction a 1-acyl-sn-glycero-3-phospho-L-serine + an acyl-CoA = a 1,2-diacyl-sn-glycero-3-phospho-L-serine + CoA. The enzyme catalyses octanoyl-CoA + a 1-acyl-sn-glycero-3-phosphoethanolamine = 1-acyl-2-octanoyl-sn-glycero-3-phosphoethanolamine + CoA. The catalysed reaction is a 1-acyl-sn-glycero-3-phosphoethanolamine + hexadecanoyl-CoA = 1-acyl-2-hexadecanoyl-sn-glycero-3-phosphoethanolamine + CoA. It catalyses the reaction a 1-acyl-sn-glycero-3-phosphoethanolamine + octadecanoyl-CoA = 1-acyl-2-octadecanoyl-sn-glycero-3-phosphoethanolamine + CoA. It carries out the reaction a 1-acyl-sn-glycero-3-phosphoethanolamine + (9Z)-octadecenoyl-CoA = 1-acyl-2-(9Z)-octadecenoyl-sn-glycero-3-phosphoethanolamine + CoA. The enzyme catalyses a 1-acyl-sn-glycero-3-phosphoethanolamine + (5Z,8Z,11Z,14Z)-eicosatetraenoyl-CoA = 1-acyl-2-(5Z,8Z,11Z,14Z)-eicosatetraenoyl-sn-glycero-3-phosphoethanolamine + CoA. The catalysed reaction is a 1-O-(1Z-alkenyl)-sn-glycero-3-phosphoethanolamine + octanoyl-CoA = 1-O-(1Z)-alkenyl-2-octanoyl-sn-glycero-3-phosphoethanolamine + CoA. It catalyses the reaction a 1-O-(1Z-alkenyl)-sn-glycero-3-phosphoethanolamine + hexadecanoyl-CoA = 1-O-(1Z)-alkenyl-2-hexadecanoyl-sn-glycero-3-phosphoethanolamine + CoA. It carries out the reaction a 1-O-(1Z-alkenyl)-sn-glycero-3-phosphoethanolamine + octadecanoyl-CoA = 1-O-(1Z)-alkenyl-2-octadecanoyl-sn-glycero-3-phosphoethanolamine + CoA. The enzyme catalyses a 1-O-(1Z-alkenyl)-sn-glycero-3-phosphoethanolamine + (9Z)-octadecenoyl-CoA = 1-O-(1Z)-alkenyl-2-(9Z)-octadecenoyl-sn-glycero-3-phosphoethanolamine + CoA. The catalysed reaction is a 1-O-(1Z-alkenyl)-sn-glycero-3-phosphoethanolamine + (5Z,8Z,11Z,14Z)-eicosatetraenoyl-CoA = 1-O-(1Z)-alkenyl-2-(5Z,8Z,11Z,14Z)-eicosatetraenoyl-sn-glycero-3-phosphoethanolamine + CoA. It catalyses the reaction a 1-acyl-sn-glycero-3-phosphocholine + hexadecanoyl-CoA = 1-acyl-2-hexadecanoyl-sn-glycero-3-phosphocholine + CoA. It carries out the reaction a 1-acyl-sn-glycero-3-phosphocholine + (9Z)-octadecenoyl-CoA = a 1-acyl-2-(9Z)-octadecenoyl-sn-glycero-3-phosphocholine + CoA. The enzyme catalyses 1-O-hexadecyl-sn-glycero-3-phosphocholine + (9Z)-octadecenoyl-CoA = 1-O-hexadecyl-2-(9Z)-octadecenoyl-sn-glycero-3-phosphocholine + CoA. The catalysed reaction is 1-O-hexadecyl-sn-glycero-3-phosphocholine + (5Z,8Z,11Z,14Z)-eicosatetraenoyl-CoA = 1-O-hexadecyl-2-(5Z,8Z,11Z,14Z)-eicosatetraenoyl-sn-glycero-3-phosphocholine + CoA. It catalyses the reaction 1-hexadecanoyl-sn-glycero-3-phospho-L-serine + (9Z)-octadecenoyl-CoA = 1-hexadecanoyl-2-(9Z-octadecenoyl)-sn-glycero-3-phospho-L-serine + CoA. It carries out the reaction 1-octadecanoyl-sn-glycero-3-phospho-(1'-sn-glycerol) + (9Z)-octadecenoyl-CoA = 1-octadecanoyl-2-(9Z-octadecenoyl)-sn-glycero-3-phospho-(1'-sn-glycerol) + CoA. The enzyme catalyses 1-octadecanoyl-sn-glycero-3-phospho-(1'-sn-glycerol) + (5Z,8Z,11Z,14Z)-eicosatetraenoyl-CoA = 1-octadecanoyl-2-(5Z,8Z,11Z,14Z-eicosatetraenoyl)-sn-glycero-3-phospho-(1'-sn-glycerol) + CoA. The protein operates within lipid metabolism; phospholipid metabolism. Functionally, displays acyl-CoA-dependent lysophospholipid acyltransferase activity with a subset of lysophospholipids as substrates; converts lysophosphatidylethanolamine to phosphatidylethanolamine, 1-alkenyl-lysophatidylethanolamine to 1-alkenyl-phosphatidylethanolamine, lysophosphatidylglycerol and alkyl-lysophosphatidylcholine to phosphatidylglycerol and alkyl-phosphatidylcholine, respectively. In contrast, has no lysophosphatidylinositol, glycerol-3-phosphate, diacylglycerol or lysophosphatidic acid acyltransferase activity. Prefers long chain acyl-CoAs (C16, C18) as acyl donors. Converts lysophosphatidylcholine to phosphatidycholine. In Mus musculus (Mouse), this protein is Lysophospholipid acyltransferase LPCAT4 (Lpcat4).